We begin with the raw amino-acid sequence, 1346 residues long: Zinc finger protein 541 (1346 aa).

2 disordered regions span residues 1–34 (MDQY…DTLN) and 113–136 (EADE…SSPQ). Positions 21–32 (FSESQGLNCSDT) are enriched in polar residues. 3 consecutive C2H2-type zinc fingers follow at residues 140–162 (LDCS…YLTH), 168–190 (HVCK…MLTH), and 196–220 (FVCI…YEVH). 4 disordered regions span residues 235–271 (ACGD…LLPH), 283–328 (VHQK…AAPA), 437–472 (SAVP…EDAL), and 578–744 (SQLP…GGYR). Composition is skewed to low complexity over residues 294–323 (PAGA…PAGP) and 440–458 (PSRE…SPSE). A compositionally biased stretch (polar residues) spans 671–685 (PDISSLAKQLRSSKG). A C2H2-type 4 zinc finger spans residues 838-860 (FVCKNCSQMFYTEKGLSSHMCFH). A disordered region spans residues 931–971 (AMGQEKDGEERDSKESSQQRKRKKRPPPSTAGEPGPAGCHQ). Residues 934–948 (QEKDGEERDSKESSQ) show a composition bias toward basic and acidic residues. The ELM2 domain occupies 1053–1145 (PHINIGSRFQ…VALETLLLRG (93 aa)). Residues 1160–1211 (TGSDVWTPIEKRLFKKAFYAHKKDFYLIHKMIQTKTVAQCVEYYYIWKKMIK) enclose the SANT domain. The disordered stretch occupies residues 1224–1281 (VKREPEEVERTEEKVPCSPRERPSHHPTPKLKTKSYRRESILSSSPNAGSKRTPELLG). The span at 1234 to 1247 (TEEKVPCSPRERPS) shows a compositional bias: basic and acidic residues. Positions 1248–1258 (HHPTPKLKTKS) are enriched in basic residues. Positions 1264 to 1273 (ILSSSPNAGS) are enriched in polar residues. The segment at 1289–1311 (FPCRECERVFDKIKSRNAHMKRH) adopts a C2H2-type 5 zinc-finger fold.

In terms of assembly, interacts with DNTTIP1. Identified in a complex with KCDT19, HDAC1 and HSPA2. Component of a histone deacetylase complex containing DNTTIP1, ZNF541, HDAC1 and HDAC2. Identified in a complex with HDAC1, HDAC2, DNTTIP1 and KCTD19.

It is found in the nucleus. In terms of biological role, transcription regulator which is essential for male fertility and for the completion of meiotic prophase in spermatocytes. Regulates progression of the pachytene stage of meiotic prophase by activating the expression of genes involved in meiosis during spermatogenesis. Maintains the repression of pre-pachytene transcriptional programs, including meiotic double-strand breaks (DSB) formation genes in pachytene spermatocytes and suppresses aberrant DSB formation after mid-pachytene, thus ensuring meiosis progression. The sequence is that of Zinc finger protein 541 (ZNF541) from Homo sapiens (Human).